The following is a 726-amino-acid chain: Catalase-peroxidase (726 aa).

Residues methionine 1–threonine 33 form a disordered region. The segment at residues tryptophan 105–tyrosine 226 is a cross-link (tryptophyl-tyrosyl-methioninium (Trp-Tyr) (with M-252)). Histidine 106 functions as the Proton acceptor in the catalytic mechanism. Positions tyrosine 226 to methionine 252 form a cross-link, tryptophyl-tyrosyl-methioninium (Tyr-Met) (with W-105). Histidine 267 contacts heme b.

The protein belongs to the peroxidase family. Peroxidase/catalase subfamily. As to quaternary structure, homodimer or homotetramer. Requires heme b as cofactor. Formation of the three residue Trp-Tyr-Met cross-link is important for the catalase, but not the peroxidase activity of the enzyme.

The enzyme catalyses H2O2 + AH2 = A + 2 H2O. It catalyses the reaction 2 H2O2 = O2 + 2 H2O. Functionally, bifunctional enzyme with both catalase and broad-spectrum peroxidase activity. The chain is Catalase-peroxidase from Escherichia coli (strain K12 / DH10B).